The following is a 444-amino-acid chain: Proline--tRNA ligase (444 aa).

It belongs to the class-II aminoacyl-tRNA synthetase family. ProS type 2 subfamily. Homodimer.

Its subcellular location is the cytoplasm. The enzyme catalyses tRNA(Pro) + L-proline + ATP = L-prolyl-tRNA(Pro) + AMP + diphosphate. Functionally, catalyzes the attachment of proline to tRNA(Pro) in a two-step reaction: proline is first activated by ATP to form Pro-AMP and then transferred to the acceptor end of tRNA(Pro). The protein is Proline--tRNA ligase of Maricaulis maris (strain MCS10) (Caulobacter maris).